The chain runs to 442 residues: Proline--tRNA ligase (442 aa).

Belongs to the class-II aminoacyl-tRNA synthetase family. ProS type 2 subfamily. As to quaternary structure, homodimer.

It is found in the cytoplasm. The enzyme catalyses tRNA(Pro) + L-proline + ATP = L-prolyl-tRNA(Pro) + AMP + diphosphate. Its function is as follows. Catalyzes the attachment of proline to tRNA(Pro) in a two-step reaction: proline is first activated by ATP to form Pro-AMP and then transferred to the acceptor end of tRNA(Pro). The protein is Proline--tRNA ligase of Chelativorans sp. (strain BNC1).